A 504-amino-acid polypeptide reads, in one-letter code: Cytochrome P450 7A1 (504 aa).

A helical transmembrane segment spans residues 4–24; the sequence is TSLIWGIAIAACCCLWLILGI. Cysteine 444 provides a ligand contact to heme.

The protein belongs to the cytochrome P450 family. It depends on heme as a cofactor. As to expression, detected in liver.

The protein resides in the endoplasmic reticulum membrane. Its subcellular location is the microsome membrane. The catalysed reaction is cholesterol + reduced [NADPH--hemoprotein reductase] + O2 = 7alpha-hydroxycholesterol + oxidized [NADPH--hemoprotein reductase] + H2O + H(+). The enzyme catalyses 4beta-hydroxycholesterol + reduced [NADPH--hemoprotein reductase] + O2 = 4beta,7alpha-dihydroxycholesterol + oxidized [NADPH--hemoprotein reductase] + H2O + H(+). It catalyses the reaction lathosterol + reduced [NADPH--hemoprotein reductase] + O2 = 7alpha,8alpha-epoxy-5alpha-cholestan-3beta-ol + oxidized [NADPH--hemoprotein reductase] + H2O + H(+). It carries out the reaction lathosterol + reduced [NADPH--hemoprotein reductase] + O2 = 5alpha-cholestan-7-oxo-3beta-ol + oxidized [NADPH--hemoprotein reductase] + H2O + H(+). The catalysed reaction is 7-dehydrocholesterol + reduced [NADPH--hemoprotein reductase] + O2 = 7-oxocholesterol + oxidized [NADPH--hemoprotein reductase] + H2O + H(+). The enzyme catalyses (24S)-hydroxycholesterol + reduced [NADPH--hemoprotein reductase] + O2 = (24S)-7alpha-dihydroxycholesterol + oxidized [NADPH--hemoprotein reductase] + H2O + H(+). It catalyses the reaction (24R)-hydroxycholesterol + reduced [NADPH--hemoprotein reductase] + O2 = (24R)-7alpha-dihydroxycholesterol + oxidized [NADPH--hemoprotein reductase] + H2O + H(+). It functions in the pathway lipid metabolism; bile acid biosynthesis. The protein operates within steroid metabolism; cholesterol degradation. A cytochrome P450 monooxygenase involved in the metabolism of endogenous cholesterol and its oxygenated derivatives (oxysterols). Mechanistically, uses molecular oxygen inserting one oxygen atom into a substrate, and reducing the second into a water molecule, with two electrons provided by NADPH via cytochrome P450 reductase (CPR; NADPH-ferrihemoprotein reductase). Functions as a critical regulatory enzyme of bile acid biosynthesis and cholesterol homeostasis. Catalyzes the hydroxylation of carbon hydrogen bond at 7-alpha position of cholesterol, a rate-limiting step in cholesterol catabolism and bile acid biosynthesis. 7-alpha hydroxylates several oxysterols, including 4beta-hydroxycholesterol and 24-hydroxycholesterol. Catalyzes the oxidation of the 7,8 double bond of 7-dehydrocholesterol and lathosterol with direct and predominant formation of the 7-keto derivatives. In Homo sapiens (Human), this protein is Cytochrome P450 7A1.